A 426-amino-acid chain; its full sequence is Serine--tRNA ligase (426 aa).

233–235 provides a ligand contact to L-serine; sequence TAE. 264–266 contributes to the ATP binding site; it reads RSE. An L-serine-binding site is contributed by E287. An ATP-binding site is contributed by 351 to 354; it reads EISS. An L-serine-binding site is contributed by S387.

The protein belongs to the class-II aminoacyl-tRNA synthetase family. Type-1 seryl-tRNA synthetase subfamily. As to quaternary structure, homodimer. The tRNA molecule binds across the dimer.

Its subcellular location is the cytoplasm. It catalyses the reaction tRNA(Ser) + L-serine + ATP = L-seryl-tRNA(Ser) + AMP + diphosphate + H(+). The enzyme catalyses tRNA(Sec) + L-serine + ATP = L-seryl-tRNA(Sec) + AMP + diphosphate + H(+). It participates in aminoacyl-tRNA biosynthesis; selenocysteinyl-tRNA(Sec) biosynthesis; L-seryl-tRNA(Sec) from L-serine and tRNA(Sec): step 1/1. Its function is as follows. Catalyzes the attachment of serine to tRNA(Ser). Is also able to aminoacylate tRNA(Sec) with serine, to form the misacylated tRNA L-seryl-tRNA(Sec), which will be further converted into selenocysteinyl-tRNA(Sec). This is Serine--tRNA ligase from Pseudomonas syringae pv. syringae (strain B728a).